Here is a 930-residue protein sequence, read N- to C-terminus: Translation initiation factor IF-2 (930 aa).

A disordered region spans residues 27-342; the sequence is LGLDVKSHSS…APKPVTERKF (316 aa). Positions 52 to 103 are enriched in low complexity; the sequence is KAAAPQAPAEKPVAAQPSPQKTPAKEAAPVKAEPTEAKAAAQPEAKTETAAP. Composition is skewed to basic and acidic residues over residues 112-128 and 136-178; these read FKAEREARAKEEAERRK and QNKE…DGRR. Positions 183-195 are enriched in polar residues; that stretch reads HQGFNGQKRQQPQ. Residues 218 to 245 are compositionally biased toward basic and acidic residues; that stretch reads RSSEERFKQAQEAKEVMERQNRRKEQPK. Residues 251-268 show a composition bias toward pro residues; that stretch reads PVQPAPAPSAPAANPSPA. Residues 280 to 297 show a composition bias toward basic and acidic residues; the sequence is ARPDKKRDDFDREEEGPR. Residues 302–318 show a composition bias toward low complexity; that stretch reads NRSSQNQVRNQRNSNWN. A tr-type G domain is found at 432–599; the sequence is ERPPVVTIMG…TVLLVAEIQE (168 aa). The segment at 441 to 448 is G1; that stretch reads GHVDHGKT. 441–448 is a binding site for GTP; that stretch reads GHVDHGKT. A G2 region spans residues 466-470; it reads GITQH. The segment at 487-490 is G3; it reads DTPG. GTP is bound by residues 487–491 and 541–544; these read DTPGH and NKID. Residues 541–544 are G4; that stretch reads NKID. Positions 577–579 are G5; the sequence is SAK.

Belongs to the TRAFAC class translation factor GTPase superfamily. Classic translation factor GTPase family. IF-2 subfamily.

It is found in the cytoplasm. One of the essential components for the initiation of protein synthesis. Protects formylmethionyl-tRNA from spontaneous hydrolysis and promotes its binding to the 30S ribosomal subunits. Also involved in the hydrolysis of GTP during the formation of the 70S ribosomal complex. This Streptococcus sanguinis (strain SK36) protein is Translation initiation factor IF-2.